The following is a 359-amino-acid chain: NF-kappa-B inhibitor beta (359 aa).

Phosphoserine; by RPS6KA1 occurs at positions 19 and 23. ANK repeat units follow at residues 57–86, 93–122, 126–155, 206–235, 240–269, and 273–302; these read DGDT…GTEY, LGQT…GVLV, GGHT…SHPR, DGHT…DLNK, CGRT…DPTA, and GGRT…PEPE. The disordered stretch occupies residues 153-192; the sequence is HPRDASDTYLTQSQDHTPDTSHAPVATDPQPNPGNEEELR. A compositionally biased stretch (basic and acidic residues) spans 298–308; it reads APEPEDKDDKL. Positions 298–359 are disordered; the sequence is APEPEDKDDK…KPLPDDPNPA (62 aa). Ser-318 carries the phosphoserine modification. Positions 318–331 are enriched in acidic residues; sequence SDSDNRDEGDEYDD. Residues 342-359 are compositionally biased toward pro residues; it reads QPPPSPAAKPLPDDPNPA.

Belongs to the NF-kappa-B inhibitor family. As to quaternary structure, interacts with THRB (via ligand-binding domain). Interacts with RELA and REL. Interacts with COMMD1. Interacts with inhibitor kappa B-interacting Ras-like NKIRAS1 and NKIRAS2. Post-translationally, phosphorylated by RPS6KA1; followed by degradation. Interaction with NKIRAS1 and NKIRAS2 probably prevents phosphorylation.

The protein resides in the cytoplasm. It localises to the nucleus. In terms of biological role, inhibits NF-kappa-B by complexing with and trapping it in the cytoplasm. However, the unphosphorylated form resynthesized after cell stimulation is able to bind NF-kappa-B allowing its transport to the nucleus and protecting it to further NFKBIA-dependent inactivation. Association with inhibitor kappa B-interacting NKIRAS1 and NKIRAS2 prevent its phosphorylation rendering it more resistant to degradation, explaining its slower degradation. This chain is NF-kappa-B inhibitor beta (Nfkbib), found in Rattus norvegicus (Rat).